Consider the following 829-residue polypeptide: Leucine--tRNA ligase (829 aa).

The 'HIGH' region signature appears at 40–50; sequence PYPSGNIHMGH. Residues 581–585 carry the 'KMSKS' region motif; the sequence is KMSKS. ATP is bound at residue Lys584.

It belongs to the class-I aminoacyl-tRNA synthetase family.

It localises to the cytoplasm. The catalysed reaction is tRNA(Leu) + L-leucine + ATP = L-leucyl-tRNA(Leu) + AMP + diphosphate. This chain is Leucine--tRNA ligase, found in Oleidesulfovibrio alaskensis (strain ATCC BAA-1058 / DSM 17464 / G20) (Desulfovibrio alaskensis).